An 864-amino-acid chain; its full sequence is Leucine--tRNA ligase (864 aa).

The 'HIGH' region motif lies at 42–52 (PYPSGKLHMGH). The 'KMSKS' region motif lies at 624 to 628 (KMSKS). Lys-627 provides a ligand contact to ATP.

This sequence belongs to the class-I aminoacyl-tRNA synthetase family.

It localises to the cytoplasm. The enzyme catalyses tRNA(Leu) + L-leucine + ATP = L-leucyl-tRNA(Leu) + AMP + diphosphate. The sequence is that of Leucine--tRNA ligase from Burkholderia thailandensis (strain ATCC 700388 / DSM 13276 / CCUG 48851 / CIP 106301 / E264).